The primary structure comprises 376 residues: Succinyl-diaminopimelate desuccinylase (376 aa).

Position 67 (His67) interacts with Zn(2+). Asp69 is an active-site residue. Asp100 lines the Zn(2+) pocket. Residue Glu134 is the Proton acceptor of the active site. Glu135, Glu163, and His349 together coordinate Zn(2+).

The protein belongs to the peptidase M20A family. DapE subfamily. As to quaternary structure, homodimer. Requires Zn(2+) as cofactor. Co(2+) is required as a cofactor.

It carries out the reaction N-succinyl-(2S,6S)-2,6-diaminopimelate + H2O = (2S,6S)-2,6-diaminopimelate + succinate. It participates in amino-acid biosynthesis; L-lysine biosynthesis via DAP pathway; LL-2,6-diaminopimelate from (S)-tetrahydrodipicolinate (succinylase route): step 3/3. Its function is as follows. Catalyzes the hydrolysis of N-succinyl-L,L-diaminopimelic acid (SDAP), forming succinate and LL-2,6-diaminopimelate (DAP), an intermediate involved in the bacterial biosynthesis of lysine and meso-diaminopimelic acid, an essential component of bacterial cell walls. This Idiomarina loihiensis (strain ATCC BAA-735 / DSM 15497 / L2-TR) protein is Succinyl-diaminopimelate desuccinylase.